Reading from the N-terminus, the 513-residue chain is GMP synthase [glutamine-hydrolyzing] (513 aa).

The Glutamine amidotransferase type-1 domain maps to 3 to 192; sequence TVVVLDYGSQ…VSKVAKMEKN (190 aa). C80 acts as the Nucleophile in catalysis. Residues H166 and E168 contribute to the active site. A GMPS ATP-PPase domain is found at 193 to 388; the sequence is WKMTDFIEEK…LGLPDEMINR (196 aa). 220–226 lines the ATP pocket; it reads SGGVDSS.

In terms of assembly, homodimer.

The enzyme catalyses XMP + L-glutamine + ATP + H2O = GMP + L-glutamate + AMP + diphosphate + 2 H(+). It participates in purine metabolism; GMP biosynthesis; GMP from XMP (L-Gln route): step 1/1. Its function is as follows. Catalyzes the synthesis of GMP from XMP. The polypeptide is GMP synthase [glutamine-hydrolyzing] (Thermosipho africanus (strain TCF52B)).